The chain runs to 786 residues: Diamine oxidase [copper-containing] 1, peroxisomal (786 aa).

419–430 (AFDAGEDGLGKN) is a binding site for substrate. The active-site Proton acceptor is D421. C440 and C466 form a disulfide bridge. 502-507 (VANYEY) lines the substrate pocket. Y505 acts as the Schiff-base intermediate with substrate; via topaquinone in catalysis. Y505 is subject to 2',4',5'-topaquinone. Cu cation is bound by residues H555 and H557. Mn(2+) contacts are provided by D710 and I711. Position 721 (H721) interacts with Cu cation.

The protein belongs to the copper/topaquinone oxidase family. In terms of assembly, homodimer. Cu cation serves as cofactor. Zn(2+) is required as a cofactor. The cofactor is L-topaquinone. Topaquinone (TPQ) is generated by copper-dependent autoxidation of a specific tyrosyl residue. As to expression, mainly expressed in roots, and, to a lower extent, in leaves and stems.

It is found in the peroxisome. The catalysed reaction is a primary methyl amine + O2 + H2O = an aldehyde + H2O2 + NH4(+). It catalyses the reaction N-methylputrescine + O2 + H2O = 4-methylaminobutanal + H2O2 + NH4(+). It functions in the pathway alkaloid biosynthesis; nicotine biosynthesis. Its pathway is amine and polyamine degradation; putrescine degradation. Its function is as follows. Involved in putrescine catabolism in peroxisomes. May also be involved in the biosynthesis of pyridine alkaloid natural products, leading mainly to the production of anabasine, anatabine, nicotine and nornicotine, effective deterrents against herbivores with antiparasitic and pesticide properties (neurotoxins); nornicotine serves as the precursor in the synthesis of the carcinogen compound N'-nitrosonornicotine (NNN). Oxidizes preferentially non-N-methylated amines. The protein is Diamine oxidase [copper-containing] 1, peroxisomal of Nicotiana tabacum (Common tobacco).